The sequence spans 624 residues: Phosphomethylpyrimidine synthase (624 aa).

The disordered stretch occupies residues 48–70 (SDTHTSQGREKNPPLTVYDTSGP). Substrate is bound by residues asparagine 229, methionine 258, tyrosine 287, histidine 323, 343–345 (SRG), 384–387 (DGLR), and glutamate 423. Histidine 427 contributes to the Zn(2+) binding site. Residue tyrosine 450 coordinates substrate. Histidine 491 contributes to the Zn(2+) binding site. Residues cysteine 571, cysteine 574, and cysteine 579 each coordinate [4Fe-4S] cluster.

Belongs to the ThiC family. As to quaternary structure, homodimer. It depends on [4Fe-4S] cluster as a cofactor.

It carries out the reaction 5-amino-1-(5-phospho-beta-D-ribosyl)imidazole + S-adenosyl-L-methionine = 4-amino-2-methyl-5-(phosphooxymethyl)pyrimidine + CO + 5'-deoxyadenosine + formate + L-methionine + 3 H(+). The protein operates within cofactor biosynthesis; thiamine diphosphate biosynthesis. Its function is as follows. Catalyzes the synthesis of the hydroxymethylpyrimidine phosphate (HMP-P) moiety of thiamine from aminoimidazole ribotide (AIR) in a radical S-adenosyl-L-methionine (SAM)-dependent reaction. The chain is Phosphomethylpyrimidine synthase from Nitrosococcus oceani (strain ATCC 19707 / BCRC 17464 / JCM 30415 / NCIMB 11848 / C-107).